Consider the following 227-residue polypeptide: Cytochrome c oxidase subunit 2 (227 aa).

The Mitochondrial intermembrane segment spans residues 1 to 14; it reads MAYPFQLGLQDATS. The chain crosses the membrane as a helical span at residues 15 to 45; the sequence is PIMEELLHFHDHTLMIVFLISSLVLYIISLM. Topologically, residues 46-59 are mitochondrial matrix; sequence LTTKLTHTSTMDAQ. Residues 60–87 traverse the membrane as a helical segment; sequence EVETVWTILPAIILILIALPSLRILYMM. The Mitochondrial intermembrane portion of the chain corresponds to 88 to 227; the sequence is DEINNPSLTV…YFETWSALMV (140 aa). Cu cation is bound by residues His161, Cys196, Glu198, Cys200, His204, and Met207. Position 198 (Glu198) interacts with Mg(2+). Tyr218 carries the phosphotyrosine modification.

It belongs to the cytochrome c oxidase subunit 2 family. Component of the cytochrome c oxidase (complex IV, CIV), a multisubunit enzyme composed of 14 subunits. The complex is composed of a catalytic core of 3 subunits MT-CO1, MT-CO2 and MT-CO3, encoded in the mitochondrial DNA, and 11 supernumerary subunits COX4I, COX5A, COX5B, COX6A, COX6B, COX6C, COX7A, COX7B, COX7C, COX8 and NDUFA4, which are encoded in the nuclear genome. The complex exists as a monomer or a dimer and forms supercomplexes (SCs) in the inner mitochondrial membrane with NADH-ubiquinone oxidoreductase (complex I, CI) and ubiquinol-cytochrome c oxidoreductase (cytochrome b-c1 complex, complex III, CIII), resulting in different assemblies (supercomplex SCI(1)III(2)IV(1) and megacomplex MCI(2)III(2)IV(2)). Found in a complex with TMEM177, COA6, COX18, COX20, SCO1 and SCO2. Interacts with TMEM177 in a COX20-dependent manner. Interacts with COX20. Interacts with COX16. It depends on Cu cation as a cofactor.

The protein localises to the mitochondrion inner membrane. The catalysed reaction is 4 Fe(II)-[cytochrome c] + O2 + 8 H(+)(in) = 4 Fe(III)-[cytochrome c] + 2 H2O + 4 H(+)(out). In terms of biological role, component of the cytochrome c oxidase, the last enzyme in the mitochondrial electron transport chain which drives oxidative phosphorylation. The respiratory chain contains 3 multisubunit complexes succinate dehydrogenase (complex II, CII), ubiquinol-cytochrome c oxidoreductase (cytochrome b-c1 complex, complex III, CIII) and cytochrome c oxidase (complex IV, CIV), that cooperate to transfer electrons derived from NADH and succinate to molecular oxygen, creating an electrochemical gradient over the inner membrane that drives transmembrane transport and the ATP synthase. Cytochrome c oxidase is the component of the respiratory chain that catalyzes the reduction of oxygen to water. Electrons originating from reduced cytochrome c in the intermembrane space (IMS) are transferred via the dinuclear copper A center (CU(A)) of subunit 2 and heme A of subunit 1 to the active site in subunit 1, a binuclear center (BNC) formed by heme A3 and copper B (CU(B)). The BNC reduces molecular oxygen to 2 water molecules using 4 electrons from cytochrome c in the IMS and 4 protons from the mitochondrial matrix. The chain is Cytochrome c oxidase subunit 2 (MT-CO2) from Canis mesomelas elongae (Eastern African black-backed jackal).